Consider the following 310-residue polypeptide: Olfactory receptor 2A25 (310 aa).

The Extracellular portion of the chain corresponds to 1-24; sequence MGGNQTSITEFLLLGFPIGPRIQM. Asn-4 is a glycosylation site (N-linked (GlcNAc...) asparagine). The helical transmembrane segment at 25-48 threads the bilayer; the sequence is LLFGLFSLFYIFILLGNGTILGLI. The Cytoplasmic portion of the chain corresponds to 49 to 56; the sequence is SLDSRLHT. Residues 57 to 78 traverse the membrane as a helical segment; sequence PMYFFLSHLAVVDIACACSTVP. Residues 79–99 are Extracellular-facing; the sequence is QMLVNLLHPAKPISFAGCMTQ. Cys-96 and Cys-188 form a disulfide bridge. A helical membrane pass occupies residues 100–119; that stretch reads MFLFLSFAHTECLLLVVMSY. Over 120–138 the chain is Cytoplasmic; the sequence is DRYVAICHPLRYSTIMTWK. Residues 139-157 traverse the membrane as a helical segment; sequence VCITLALTSWILGVLLALV. Topologically, residues 158–195 are extracellular; sequence HLVLLLPLSFCGPQKLNHFFCEIMAVLKLACADTHINE. The helical transmembrane segment at 196–218 threads the bilayer; sequence VMVLAGAVSVLVGAFFSTVISYV. Topologically, residues 219–235 are cytoplasmic; that stretch reads HILCAILKIQSGEGCQK. Residues 236 to 258 traverse the membrane as a helical segment; that stretch reads AFSICSSHLCVVGLFYGTAIIMY. Over 259–271 the chain is Extracellular; it reads VEPQYESPKEQKK. A helical membrane pass occupies residues 272–291; sequence YLLLFHSLFNPMLNPLIYSL. At 292–310 the chain is on the cytoplasmic side; it reads RNKEVQGTLKRMLEKKRTS.

It belongs to the G-protein coupled receptor 1 family.

It localises to the cell membrane. Its function is as follows. Odorant receptor. The sequence is that of Olfactory receptor 2A25 (OR2A25) from Homo sapiens (Human).